Here is a 345-residue protein sequence, read N- to C-terminus: Growth hormone-inducible transmembrane protein (345 aa).

Residues 1–45 (MLAARLVCLRTLPSRVFHPAFTKASPVVKNSITKNQWLLTPSREY) constitute a mitochondrion transit peptide. Residues 46–82 (ATKTRIGIRRGRTGQELKEAALEPSMEKIFKIDQMGR) lie on the Mitochondrial matrix side of the membrane. Residues 83–103 (WFVAGGAAVGLGALCYYGLGL) form a helical membrane-spanning segment. Residues 104 to 125 (SNEIGAIEKAVIWPQYVKDRIH) lie on the Mitochondrial intermembrane side of the membrane. Residues 126-146 (STYMYLAGSIGLTALSAIAIS) traverse the membrane as a helical segment. Residues 147 to 159 (RTPVLMNFMMRGS) lie on the Mitochondrial matrix side of the membrane. The chain crosses the membrane as a helical span at residues 160 to 180 (WVTIGVTFAAMVGAGMLVRSI). The Mitochondrial intermembrane segment spans residues 181 to 190 (PYDQSPGPKH). The helical transmembrane segment at 191-211 (LAWLLHSGVMGAVVAPLTILG) threads the bilayer. Topologically, residues 212–213 (GP) are mitochondrial matrix. The chain crosses the membrane as a helical span at residues 214-234 (LLIRAAWYTAGIVGGLSTVAM). Topologically, residues 235-244 (CAPSEKFLNM) are mitochondrial intermembrane. The helical transmembrane segment at 245-265 (GAPLGVGLGLVFVSSLGSMFL) threads the bilayer. Over 266–271 (PPTTVA) the chain is Mitochondrial matrix. The chain crosses the membrane as a helical span at residues 272–292 (GATLYSVAMYGGLVLFSMFLL). Residues 293-345 (YDTQKVIKRAEVSPMYGVQKYDPINSMLSIYMDTLNIFMRVATMLATGGNRKK) are Mitochondrial intermembrane-facing.

Belongs to the BI1 family. As to quaternary structure, interacts with LETM1. Interacts with AFG3L2. Post-translationally, undergoes AFG3L2-mediated proteolytic degradation, upon hyperpolarization of mitochondria.

Its subcellular location is the mitochondrion inner membrane. The enzyme catalyses Ca(2+)(in) + 2 H(+)(out) = Ca(2+)(out) + 2 H(+)(in). It carries out the reaction K(+)(in) + H(+)(out) = K(+)(out) + H(+)(in). In terms of biological role, plays an important role in maintenance of mitochondrial morphology and in mediating either calcium or potassium/proton antiport. Mediates proton-dependent calcium efflux from mitochondrion. Also functions as an electroneutral mitochondrial proton/potassium exchanger. Required for the mitochondrial tubular network and cristae organization. Involved in apoptotic release of cytochrome c. Inhibits the proteolytic activity of AFG3L2, stimulating respiration and stabilizing respiratory enzymes in actively respiring mitochondria. However, when mitochondria become hyperpolarized, GHITM loses its inhibitory activity toward AFG3L2 and the now the active AFG3L2 turns first on GHITM and, if hyperpolarization persists, on other proteins of the mitochondria, leading to a broad remodeling of the mitochondrial proteome. The sequence is that of Growth hormone-inducible transmembrane protein (GHITM) from Homo sapiens (Human).